The sequence spans 343 residues: Probable 3',5'-cyclic-nucleotide phosphodiesterase (343 aa).

A signal peptide spans 1–36 (MKYLSIKSASDKIKSGLLKTGVILSFSLFSSLSTAA).

This sequence belongs to the cyclic nucleotide phosphodiesterase class-II family.

The protein localises to the periplasm. It catalyses the reaction a nucleoside 3',5'-cyclic phosphate + H2O = a nucleoside 5'-phosphate + H(+). The protein is Probable 3',5'-cyclic-nucleotide phosphodiesterase (cpdP) of Yersinia pestis.